Consider the following 511-residue polypeptide: Maturase K (511 aa).

The protein belongs to the intron maturase 2 family. MatK subfamily.

The protein resides in the plastid. It is found in the chloroplast. Usually encoded in the trnK tRNA gene intron. Probably assists in splicing its own and other chloroplast group II introns. This Paulownia tomentosa (Princess tree) protein is Maturase K.